The following is a 194-amino-acid chain: Probable GTP-binding protein EngB (194 aa).

The EngB-type G domain occupies 22 to 194 (DLPEYALAGR…AWQFIKEGME (173 aa)). GTP is bound by residues 30–37 (GRSNVGKS), 57–61 (GKTQT), 75–78 (DVPG), 142–145 (TKAD), and 174–176 (FSS). Mg(2+) is bound by residues Ser-37 and Thr-59.

It belongs to the TRAFAC class TrmE-Era-EngA-EngB-Septin-like GTPase superfamily. EngB GTPase family. Requires Mg(2+) as cofactor.

Necessary for normal cell division and for the maintenance of normal septation. The chain is Probable GTP-binding protein EngB from Listeria welshimeri serovar 6b (strain ATCC 35897 / DSM 20650 / CCUG 15529 / CIP 8149 / NCTC 11857 / SLCC 5334 / V8).